An 802-amino-acid chain; its full sequence is MASRHYSAKNTTKKIRNIGIIAHIDAGKTTTTERILYLSGTIKHLGNVDEGDTTMDFLPAERERGITIASAATSFNWNNHTVNLIDTPGHADFTFEVIRSIRVLDGAVCILDGVAGVEAQTEKVWKQASEMGIPKIAFVNKMDRAGAGFGRTVKEIVSKLRTRVALLTVPVFSKSSDQVFEGVVDILNGCVITWTTGGDGKQTVVVPVSEASAEVQEEYQKARTALVETLTELDEELVEKFLESEDYMQITTEDIKRALRTATINNDIVPVLCGASFRNIGVQPLMDAVVDFLPSPAERPPTDALIAKSYTGGKKSKVIPERAITLDDSMKNLCCALCFKVVQDPQKGTLVYVRVYKGELKQNSVLYNTTSGTKDRVSRLLKVHADTTSEVTSITEGNIGVILGSQGLATGDTIVCHSIKKDGVMKLPPDNRLIQLKPIAVPPPVFFVRIDPASIGDTRPMNEALELLLREDPSLNVSFDDETNQTTLSGMGELHLEIAQNRLIEDFKANIVIGPIIISYKETLNEPTKSITKTVEPEPGAVSTVRLRLEPITEMDEACENENVIDHEQNTVSFPYELSDADLESVGEGNQRISFERDTKELTPEIMEECFRVGSIPPLVSCGPVCRLPLRSVRVVIEAWHIAQHINNTASLKTATRLAIMEALSTANATLMEPIMNVYVSVNEADIGLVVKDLSGSRNGQIVSIMDPSQLNEGDIHSEEYVAMATNTYVPADYTMYLSKHQDQTRTQQSVVHARVPLREMVGYLKTLRSMTQGRGSFTMEVDQYEAVTPDKIQPIVDSIFA.

The 285-residue stretch at 13–297 (KKIRNIGIIA…AVVDFLPSPA (285 aa)) folds into the tr-type G domain. GTP is bound by residues 22–29 (AHIDAGKT), 86–90 (DTPGH), and 140–143 (NKMD).

The protein belongs to the TRAFAC class translation factor GTPase superfamily. Classic translation factor GTPase family. EF-G/EF-2 subfamily.

It localises to the mitochondrion. In terms of biological role, mitochondrial GTPase that mediates the disassembly of ribosomes from messenger RNA at the termination of mitochondrial protein biosynthesis. Not involved in the GTP-dependent ribosomal translocation step during translation elongation. The polypeptide is Ribosome-releasing factor 2, mitochondrial (Yarrowia lipolytica (strain CLIB 122 / E 150) (Yeast)).